A 202-amino-acid polypeptide reads, in one-letter code: PXMP2/4 family protein 1 (202 aa).

Transmembrane regions (helical) follow at residues 21–41 (PVITKSLTGTVVFFLGDTLAQ), 54–72 (LMMCTVGTFIVVPQIHFWF), 138–154 (KAWMIWPLTNCILFRFV), and 161–177 (LISNLVSVGWNCILSTV).

It belongs to the peroxisomal membrane protein PXMP2/4 family.

The protein localises to the membrane. This Dictyostelium discoideum (Social amoeba) protein is PXMP2/4 family protein 1.